The chain runs to 621 residues: Stimulated by retinoic acid gene 6 protein-like (621 aa).

Over 1-21 (MLAASTRTRQINITCDNPVDR) the chain is Extracellular. An N-linked (GlcNAc...) asparagine glycan is attached at asparagine 12. Residues 22–42 (EVFLHYSLIPSLCIILVLSFL) traverse the membrane as a helical segment. At 43 to 53 (QRREHRRQRDD) the chain is on the cytoplasmic side. A helical transmembrane segment spans residues 54–74 (TSYLLGNHFGIIVPLDFVGTF). Residues 75–110 (SNRWSYGAAFGATANKVMFLFSEGYQPLTVPQWAQA) are Extracellular-facing. Residues 111–131 (FVLFIGGMEVGLSYFPFFACL) traverse the membrane as a helical segment. Over 132–137 (SSEFQL) the chain is Cytoplasmic. A helical transmembrane segment spans residues 138 to 158 (VSSILGFSYSLTWFVVTVLQI). Over 159 to 173 (SQCPHGQFLGRFETL) the chain is Extracellular. The helical transmembrane segment at 174–194 (VFYWPSLLCLGFLLGRFLHMF) threads the bilayer. The Cytoplasmic segment spans residues 195–258 (LKALPVHLGL…CFQFPSRMVG (64 aa)). A helical transmembrane segment spans residues 259–279 (TLLLAFICLYLFIVIEFCVFL). Over 280–321 (HVRDKLDMFEDKLESYLTHMNETGTLTPIILQVKELISVTKG) the chain is Extracellular. The chain crosses the membrane as a helical span at residues 322-342 (VWVVTILPAALTCVTYLFHIL). The Cytoplasmic segment spans residues 343–383 (ACYRKHMKRLWAGDKHFLPQKFHSPSSAASVVAIARYSGWQ). A helical membrane pass occupies residues 384–404 (IAYILWGYLIIHVVQSLCGVM). At 405 to 424 (LMYGLVLPIIHHRGLEMLQG) the chain is on the extracellular side. Residues 425–445 (FGLGVLTLSIVVGLIILQVWI) traverse the membrane as a helical segment. Over 446–476 (AGTFFLQPKLGTSDKQKPLALNNRRAFHNFN) the chain is Cytoplasmic. Residues 477 to 497 (YFLFFYNVLLGLGACLSRLLI) traverse the membrane as a helical segment. Residues 498 to 621 (SCLLGTWLIA…TQILLTCSDC (124 aa)) are Extracellular-facing. At threonine 612 the chain carries Phosphothreonine.

Glycosylated. As to expression, highly expressed in liver and small intestine. Also expressed in spleen, kidney, colon, stomach, placenta, adipose tissue and isolated adipocytes.

Its subcellular location is the cell membrane. Functionally, acts as a high-affinity cell-surface receptor for retinol-binding protein RBP4 and mediates RBP4-dependent retinol uptake in the liver. This is Stimulated by retinoic acid gene 6 protein-like from Mus musculus (Mouse).